A 362-amino-acid polypeptide reads, in one-letter code: Bifunctional chorismate mutase/prephenate dehydratase (362 aa).

A Chorismate mutase domain is found at 3–91 (QTIDELLIPH…ECLAVERPLT (89 aa)). Positions 13, 30, 41, and 52 each coordinate substrate. One can recognise a Prephenate dehydratase domain in the interval 92 to 269 (IAYLGPQGTF…NTTRFLVMGH (178 aa)). The region spanning 281-356 (SLAVSAPNRA…RASFVKAIGS (76 aa)) is the ACT domain.

It localises to the cytoplasm. It carries out the reaction chorismate = prephenate. The catalysed reaction is prephenate + H(+) = 3-phenylpyruvate + CO2 + H2O. The protein operates within amino-acid biosynthesis; L-phenylalanine biosynthesis; phenylpyruvate from prephenate: step 1/1. It functions in the pathway metabolic intermediate biosynthesis; prephenate biosynthesis; prephenate from chorismate: step 1/1. Functionally, catalyzes the Claisen rearrangement of chorismate to prephenate and the decarboxylation/dehydration of prephenate to phenylpyruvate. This Neisseria gonorrhoeae (strain ATCC 700825 / FA 1090) protein is Bifunctional chorismate mutase/prephenate dehydratase (pheA).